We begin with the raw amino-acid sequence, 193 residues long: Peptidyl-tRNA hydrolase 1 (193 aa).

Tyrosine 27 contributes to the tRNA binding site. Histidine 32 (proton acceptor) is an active-site residue. Residues phenylalanine 80, asparagine 82, and asparagine 128 each coordinate tRNA.

It belongs to the PTH family. In terms of assembly, monomer.

It localises to the cytoplasm. The catalysed reaction is an N-acyl-L-alpha-aminoacyl-tRNA + H2O = an N-acyl-L-amino acid + a tRNA + H(+). Its function is as follows. Hydrolyzes ribosome-free peptidyl-tRNAs (with 1 or more amino acids incorporated), which drop off the ribosome during protein synthesis, or as a result of ribosome stalling. Catalyzes the release of premature peptidyl moieties from peptidyl-tRNA molecules trapped in stalled 50S ribosomal subunits, and thus maintains levels of free tRNAs and 50S ribosomes. This is Peptidyl-tRNA hydrolase 1 from Corynebacterium jeikeium (strain K411).